Here is a 340-residue protein sequence, read N- to C-terminus: Protein-arginine kinase (340 aa).

A Phosphagen kinase C-terminal domain is found at 21 to 242 (VVLSSRIRLA…EQIIMQERVA (222 aa)). Residues 24–28 (SSRIR), H79, R113, 164–168 (RASVM), and 195–200 (RGIYGE) contribute to the ATP site.

The protein belongs to the ATP:guanido phosphotransferase family.

It catalyses the reaction L-arginyl-[protein] + ATP = N(omega)-phospho-L-arginyl-[protein] + ADP + H(+). Its function is as follows. Catalyzes the specific phosphorylation of arginine residues in proteins. This chain is Protein-arginine kinase, found in Listeria monocytogenes serotype 4b (strain F2365).